A 471-amino-acid polypeptide reads, in one-letter code: Mitochondrial distribution and morphology protein 10 (471 aa).

Disordered regions lie at residues 272–291 (TEMP…SNHG), 374–394 (ADTP…DEEN), and 436–455 (SWAA…GGVS). Positions 276–288 (SSSSSTSSTTTTS) are enriched in low complexity. A compositionally biased stretch (gly residues) spans 444–455 (AGGGQSVGGGVS).

The protein belongs to the MDM10 family. As to quaternary structure, component of the ER-mitochondria encounter structure (ERMES) or MDM complex, composed of mmm1, mdm10, mdm12 and mdm34. Associates with the mitochondrial outer membrane sorting assembly machinery SAM(core) complex.

It is found in the mitochondrion outer membrane. Functionally, component of the ERMES/MDM complex, which serves as a molecular tether to connect the endoplasmic reticulum and mitochondria. Components of this complex are involved in the control of mitochondrial shape and protein biogenesis and may function in phospholipid exchange. mdm10 is involved in the late assembly steps of the general translocase of the mitochondrial outer membrane (TOM complex). Functions in the tom40-specific route of the assembly of outer membrane beta-barrel proteins, including the association of tom40 with the receptor tom22 and small TOM proteins. Can associate with the SAM(core) complex as well as the mdm12-mmm1 complex, both involved in late steps of the major beta-barrel assembly pathway, that is responsible for biogenesis of all outer membrane beta-barrel proteins. May act as a switch that shuttles between both complexes and channels precursor proteins into the tom40-specific pathway. Plays a role in mitochondrial morphology and in the inheritance of mitochondria. The polypeptide is Mitochondrial distribution and morphology protein 10 (mdmB) (Neosartorya fischeri (strain ATCC 1020 / DSM 3700 / CBS 544.65 / FGSC A1164 / JCM 1740 / NRRL 181 / WB 181) (Aspergillus fischerianus)).